Here is a 1494-residue protein sequence, read N- to C-terminus: Ral GTPase-activating protein subunit beta (1494 aa).

Disordered stretches follow at residues Pro355–Arg437 and Glu709–Glu738. Ser359 is subject to Phosphoserine. Thr363 and Thr379 each carry phosphothreonine. Composition is skewed to polar residues over residues Ser369–Pro381, Asn392–Glu428, and Asn711–Pro735. Phosphoserine is present on residues Ser421 and Ser720. Thr734 carries the post-translational modification Phosphothreonine. Residues Ile1149–Ile1392 enclose the Rap-GAP domain. Ser1285 is subject to Phosphoserine. The span at Asn1312–Ser1323 shows a compositional bias: polar residues. The segment at Asn1312 to Pro1335 is disordered.

Component of the heterodimeric RalGAP1 complex with RALGAPA1 and of the heterodimeric RalGAP2 complex with RALGAPA2. Heterodimerization is required for activity. In terms of tissue distribution, highly expressed in brain, mostly in amygdala.

Its function is as follows. Non-catalytic subunit of the heterodimeric RalGAP1 and RalGAP2 complexes which act as GTPase activators for the Ras-like small GTPases RALA and RALB. The sequence is that of Ral GTPase-activating protein subunit beta (RALGAPB) from Homo sapiens (Human).